Consider the following 343-residue polypeptide: Tribbles homolog 2 (343 aa).

The disordered stretch occupies residues 25-50; sequence EELSSIRSAEPSQSFSPNLGSPSPPE. The segment covering 29-45 has biased composition (polar residues); it reads SIRSAEPSQSFSPNLGS. Residues 61-308 enclose the Protein kinase domain; the sequence is IGKYLLLEPL…SQEILDHPWF (248 aa).

This sequence belongs to the protein kinase superfamily. CAMK Ser/Thr protein kinase family. Tribbles subfamily. As to expression, expressed in granulosa cells of the dominant follicles of the ovary and down-regulated in ovulatory follicles.

It is found in the cytoplasm. The protein resides in the cytoskeleton. Its function is as follows. Interacts with MAPK kinases and regulates activation of MAP kinases. Does not display kinase activity. The protein is Tribbles homolog 2 of Bos taurus (Bovine).